Reading from the N-terminus, the 101-residue chain is UPF0235 protein MMP1055 (101 aa).

Belongs to the UPF0235 family.

This is UPF0235 protein MMP1055 from Methanococcus maripaludis (strain DSM 14266 / JCM 13030 / NBRC 101832 / S2 / LL).